We begin with the raw amino-acid sequence, 160 residues long: MTDFIPTTDLSDAQPQAQVAAPVLRDFGGRTRFQGAAVTLRISENNPLVRQTLQTPGAGRVLVVDGGGSLNCALLGGNLGVFGVENGWEGVIIHGCVRDTAELRELDLGIRALAAHPRRSGKLEEGERDVPVTFAGVTIRPGDHVVADEDGWLVLGAESP.

Substrate contacts are provided by residues 76–79 (GGNL) and R98. Residue D99 coordinates a divalent metal cation.

It belongs to the class II aldolase/RraA-like family. As to quaternary structure, homotrimer. It depends on a divalent metal cation as a cofactor.

The enzyme catalyses 4-hydroxy-4-methyl-2-oxoglutarate = 2 pyruvate. It carries out the reaction oxaloacetate + H(+) = pyruvate + CO2. In terms of biological role, catalyzes the aldol cleavage of 4-hydroxy-4-methyl-2-oxoglutarate (HMG) into 2 molecules of pyruvate. Also contains a secondary oxaloacetate (OAA) decarboxylase activity due to the common pyruvate enolate transition state formed following C-C bond cleavage in the retro-aldol and decarboxylation reactions. This chain is Putative 4-hydroxy-4-methyl-2-oxoglutarate aldolase, found in Deinococcus radiodurans (strain ATCC 13939 / DSM 20539 / JCM 16871 / CCUG 27074 / LMG 4051 / NBRC 15346 / NCIMB 9279 / VKM B-1422 / R1).